A 586-amino-acid chain; its full sequence is Phosphomethylpyrimidine synthase (586 aa).

The segment at 1 to 58 is disordered; it reads MKQSVSAEQIELKSSLPGSKKVYVDGPREGMKVPMREIEQSDTNGVPNPPIRVYDTSG. Residues 22 to 39 are compositionally biased toward basic and acidic residues; sequence VYVDGPREGMKVPMREIE. Substrate is bound by residues asparagine 193, methionine 222, tyrosine 251, histidine 287, 307–309, 348–351, and glutamate 387; these read SRG and DGLR. Histidine 391 contacts Zn(2+). Residue tyrosine 414 participates in substrate binding. Histidine 455 is a Zn(2+) binding site. [4Fe-4S] cluster-binding residues include cysteine 535, cysteine 538, and cysteine 543.

This sequence belongs to the ThiC family. It depends on [4Fe-4S] cluster as a cofactor.

It catalyses the reaction 5-amino-1-(5-phospho-beta-D-ribosyl)imidazole + S-adenosyl-L-methionine = 4-amino-2-methyl-5-(phosphooxymethyl)pyrimidine + CO + 5'-deoxyadenosine + formate + L-methionine + 3 H(+). The protein operates within cofactor biosynthesis; thiamine diphosphate biosynthesis. Catalyzes the synthesis of the hydroxymethylpyrimidine phosphate (HMP-P) moiety of thiamine from aminoimidazole ribotide (AIR) in a radical S-adenosyl-L-methionine (SAM)-dependent reaction. This Bacillus thuringiensis (strain Al Hakam) protein is Phosphomethylpyrimidine synthase.